Here is a 110-residue protein sequence, read N- to C-terminus: UPF0060 membrane protein Psyr_3752 (110 aa).

A run of 4 helical transmembrane segments spans residues 5–25 (LWFFLAALFEIFGCYAFWLWL), 28–48 (GKSALWVIPALVSLTVFALLL), 59–79 (AYAAYGGIYIVASIAWLGLVE), and 84–104 (LGTDWLGLAFCVIGATIILLG).

Belongs to the UPF0060 family.

It is found in the cell inner membrane. The chain is UPF0060 membrane protein Psyr_3752 from Pseudomonas syringae pv. syringae (strain B728a).